Here is a 462-residue protein sequence, read N- to C-terminus: MSDFKFTNTETELVVSLFVSKEQVDKEYQKLETEALKKIKVNGYRAGKAPKEALRARLNSKDLLDRVLQNLSKENLNEVYKQLMERKEPVTFAYTIDLKEKENGFTFDYKFAKVPTVSDLDVKSAKTELKLEKVTDKDVLESIETRLNEGRSRVKVEDEAKKGDEVLFDFKGYIDGEAFEGGEAEDYSLVLGSAQFIAGFEEQLLGKKAGWKGEIKATFPSTYYVKNYRDKEATFEINLKEVRRVNSLKLDSKEFKDSPLGSEEYLGQYKVFVKKDLVVSRFIQSQRDFLDELVKELSQSVKFHISDLLLKEKIAQLDKQFNDQLKQYKVKRKEYLEVIKATEEDIQVELKTSAVNEYKLSYIYQELLKEFKKEFTEEEKKQYQEVFDALKFTSPSNDLLDQLAVLEGLLEKTSRTKELKAWNDYKVYLVEELKKLDKEIQSMQEKQTQEPAEEKVETKEEK.

Positions 163-248 (GDEVLFDFKG…LKEVRRVNSL (86 aa)) constitute a PPIase FKBP-type domain. Residues 442 to 462 (SMQEKQTQEPAEEKVETKEEK) are disordered. Residues 452 to 462 (AEEKVETKEEK) are compositionally biased toward basic and acidic residues.

The protein belongs to the FKBP-type PPIase family. Tig subfamily.

The protein resides in the cytoplasm. The catalysed reaction is [protein]-peptidylproline (omega=180) = [protein]-peptidylproline (omega=0). Involved in protein export. Acts as a chaperone by maintaining the newly synthesized protein in an open conformation. Functions as a peptidyl-prolyl cis-trans isomerase. This Mycoplasmopsis synoviae (strain 53) (Mycoplasma synoviae) protein is Trigger factor.